A 279-amino-acid chain; its full sequence is Histone chaperone ASF1 (279 aa).

The tract at residues 1 to 143 (MSIVSLLGIK…HIVRNILAEK (143 aa)) is interaction with HIR1. Positions 1–155 (MSIVSLLGIK…VTRFNIVWDN (155 aa)) are interaction with histone H3, histone H4, RAD53 and the RF-C complex. The tract at residues 156–279 (ENEGDLYPPE…TPKDAARSTN (124 aa)) is disordered. Acidic residues predominate over residues 168–244 (GVDDEEEEDD…DEEEGEEEVG (77 aa)). A coiled-coil region spans residues 192 to 243 (DDQEDGEGEAEEAAEEEEEEEEKTEDNETNLEEEEEDIENSDGDEEEGEEEV). 2 stretches are compositionally biased toward basic and acidic residues: residues 245 to 254 (SVDKNEDGND) and 269 to 279 (STPKDAARSTN).

It belongs to the ASF1 family. As to quaternary structure, interacts with histone H3/H4 heterodimers via both histone H3 and histone H4. Binds with higher affinity to H3/H4 heterodimers where histone H3 has been pre-acetylated on 'Lys-14'. Interacts with RAD53 and this may impair interaction with histones and chromatin assembly; the interaction is reduced upon activation of DNA damage or replication checkpoints which in turn promotes histone binding and chromatin assembly. Interacts with the CAC2 subunit of chromatin assembly factor 1 (CAF-1). Interacts with the HIR1, HIR2, HIR3 and HPC2 subunits of the HIR complex. Interacts with the RFC1, RFC2, RFC3, RFC4 and RFC5 subunits of the replication factor C (RF-C/RFC) complex; which may recruit this protein to DNA. Interacts with the SAS2, SAS4 and SAS5 subunits of the SAS/SAS-I complex. Interacts with the BDF1, BDF2, SPT15, TAF1 and TAF7 subunits of the TFIID complex. Interacts with RTT109 and VPS75; the interaction with RTT109 is direct.

It is found in the nucleus. Its function is as follows. Histone chaperone that facilitates histone deposition and histone exchange and removal during nucleosome assembly and disassembly. Facilitates histone deposition through both replication-dependent and replication-independent chromatin assembly pathways. Cooperates with chromatin assembly factor 1 (CAF-1) to promote replication-dependent chromatin assembly and with the HIR complex to promote replication-independent chromatin assembly, which may occur during transcription and DNA repair. May be required for the maintenance of a subset of replication elongation factors, including DNA polymerase epsilon, the RFC complex and PCNA, at stalled replication forks. Also required for RTT109-dependent acetylation of histone H3 on 'Lys-9' and 'Lys-56'. Promotion of RTT109-mediated histone H3 'Lys-56' acetylation is dependent on interactions with histone H3 pre-acetylated on 'Lys-14'. The chain is Histone chaperone ASF1 from Saccharomyces cerevisiae (strain ATCC 204508 / S288c) (Baker's yeast).